The following is a 625-amino-acid chain: Procollagen galactosyltransferase 2 (625 aa).

The N-terminal stretch at M1–A26 is a signal peptide. N96, N184, N381, and N579 each carry an N-linked (GlcNAc...) asparagine glycan. Residues Q597–L625 form a disordered region. The Prevents secretion from ER signature appears at R622–L625.

The protein belongs to the glycosyltransferase 25 family.

The protein localises to the endoplasmic reticulum lumen. It carries out the reaction (5R)-5-hydroxy-L-lysyl-[collagen] + UDP-alpha-D-galactose = (5R)-5-O-(beta-D-galactosyl)-5-hydroxy-L-lysyl-[collagen] + UDP + H(+). In terms of biological role, beta-galactosyltransferase that transfers beta-galactose to hydroxylysine residues of collagen. This is Procollagen galactosyltransferase 2 (Colgalt2) from Mus musculus (Mouse).